Consider the following 471-residue polypeptide: 3-isopropylmalate dehydratase large subunit (471 aa).

3 residues coordinate [4Fe-4S] cluster: cysteine 347, cysteine 407, and cysteine 410.

The protein belongs to the aconitase/IPM isomerase family. LeuC type 1 subfamily. Heterodimer of LeuC and LeuD. [4Fe-4S] cluster is required as a cofactor.

The enzyme catalyses (2R,3S)-3-isopropylmalate = (2S)-2-isopropylmalate. The protein operates within amino-acid biosynthesis; L-leucine biosynthesis; L-leucine from 3-methyl-2-oxobutanoate: step 2/4. Its function is as follows. Catalyzes the isomerization between 2-isopropylmalate and 3-isopropylmalate, via the formation of 2-isopropylmaleate. The polypeptide is 3-isopropylmalate dehydratase large subunit (Vibrio parahaemolyticus serotype O3:K6 (strain RIMD 2210633)).